A 221-amino-acid chain; its full sequence is Serine/arginine-rich splicing factor 9 (221 aa).

RRM domains are found at residues 14–89 (GRIY…FPRA) and 111–187 (FRVL…PERG). Residue lysine 36 forms a Glycyl lysine isopeptide (Lys-Gly) (interchain with G-Cter in SUMO2) linkage. Positions 187 to 198 (GTSYGCSRSRSG) are enriched in low complexity. Positions 187 to 221 (GTSYGCSRSRSGSRGRDSPYQSRGSPHYFSPFRPY) are disordered. The interval 188-200 (TSYGCSRSRSGSR) is interaction with SAFB1. Phosphoserine is present on residues serine 189, serine 193, serine 195, serine 204, serine 208, and serine 211. At tyrosine 214 the chain carries Phosphotyrosine. A Phosphoserine modification is found at serine 216.

The protein belongs to the splicing factor SR family. In terms of assembly, interacts with KHDRBS3. Interacts with HABP4. Interacts with NOL3/ARC/NOP30. Interacts with NSEP1/YB-1/YB1. Interacts with SAFB/SAFB1. Interacts with SRSF6/SFRS6. Interacts with TRA2B/SFRS10. Interacts with C1QBP. May also interact with DUSP11/PIR1. In terms of processing, extensively phosphorylated on serine residues in the RS domain.

Its subcellular location is the nucleus. Plays a role in constitutive splicing and can modulate the selection of alternative splice sites. Represses the splicing of MAPT/Tau exon 10. The polypeptide is Serine/arginine-rich splicing factor 9 (Srsf9) (Rattus norvegicus (Rat)).